The chain runs to 498 residues: Isoflavone 2'-hydroxylase (498 aa).

The helical transmembrane segment at 3 to 23 threads the bilayer; that stretch reads ILSYLCYSLFYLSIFFIIRLL. Cys436 contacts heme.

The protein belongs to the cytochrome P450 family. The cofactor is heme. As to expression, expressed constitutively in roots, but present at very low levels in uninfected stems and leaves.

It localises to the endoplasmic reticulum membrane. It catalyses the reaction formononetin + reduced [NADPH--hemoprotein reductase] + O2 = 2'-hydroxyformononetin + oxidized [NADPH--hemoprotein reductase] + H2O + H(+). Functionally, involved in the biosynthesis of the pterocarpin phytoalexins. Acts on isoflavones with a 4'-methoxy group on the B-ring, such as formononetin and biochanin A, and on pseudobaptigenin. Has a low activity with daidzein and genistein and no activity with the 7-O-methylated isoflavonoids isoformononetin and prunetin. This Medicago truncatula (Barrel medic) protein is Isoflavone 2'-hydroxylase.